The following is a 381-amino-acid chain: 5-amino-6-(D-ribitylamino)uracil--L-tyrosine 4-hydroxyphenyl transferase (381 aa).

The Radical SAM core domain occupies 59-306; that stretch reads VTYVVNRNIN…TAVARIFLGN (248 aa). Residues cysteine 73, cysteine 77, and cysteine 80 each coordinate [4Fe-4S] cluster.

It belongs to the radical SAM superfamily. CofH family. In terms of assembly, consists of two subunits, CofG and CofH. It depends on [4Fe-4S] cluster as a cofactor.

It carries out the reaction 5-amino-6-(D-ribitylamino)uracil + L-tyrosine + S-adenosyl-L-methionine = 5-amino-5-(4-hydroxybenzyl)-6-(D-ribitylimino)-5,6-dihydrouracil + 2-iminoacetate + 5'-deoxyadenosine + L-methionine + H(+). Its pathway is cofactor biosynthesis; coenzyme F0 biosynthesis. Catalyzes the radical-mediated synthesis of 5-amino-5-(4-hydroxybenzyl)-6-(D-ribitylimino)-5,6-dihydrouracil from 5-amino-6-(D-ribitylamino)uracil and L-tyrosine. This Cyanothece sp. (strain PCC 7425 / ATCC 29141) protein is 5-amino-6-(D-ribitylamino)uracil--L-tyrosine 4-hydroxyphenyl transferase.